The sequence spans 146 residues: Aspartate 1-decarboxylase (146 aa).

Ser-25 acts as the Schiff-base intermediate with substrate; via pyruvic acid in catalysis. The residue at position 25 (Ser-25) is a Pyruvic acid (Ser). Thr-57 is a substrate binding site. The active-site Proton donor is the Tyr-58. Residue 73–75 (GPA) coordinates substrate.

Belongs to the PanD family. Heterooctamer of four alpha and four beta subunits. It depends on pyruvate as a cofactor. In terms of processing, is synthesized initially as an inactive proenzyme, which is activated by self-cleavage at a specific serine bond to produce a beta-subunit with a hydroxyl group at its C-terminus and an alpha-subunit with a pyruvoyl group at its N-terminus.

Its subcellular location is the cytoplasm. The catalysed reaction is L-aspartate + H(+) = beta-alanine + CO2. The protein operates within cofactor biosynthesis; (R)-pantothenate biosynthesis; beta-alanine from L-aspartate: step 1/1. In terms of biological role, catalyzes the pyruvoyl-dependent decarboxylation of aspartate to produce beta-alanine. The polypeptide is Aspartate 1-decarboxylase (Salinibacter ruber (strain DSM 13855 / M31)).